Consider the following 476-residue polypeptide: tRNA(Ile)-lysidine synthase (476 aa).

Residue 30-35 (SGGPDS) coordinates ATP.

The protein belongs to the tRNA(Ile)-lysidine synthase family.

It is found in the cytoplasm. It catalyses the reaction cytidine(34) in tRNA(Ile2) + L-lysine + ATP = lysidine(34) in tRNA(Ile2) + AMP + diphosphate + H(+). Ligates lysine onto the cytidine present at position 34 of the AUA codon-specific tRNA(Ile) that contains the anticodon CAU, in an ATP-dependent manner. Cytidine is converted to lysidine, thus changing the amino acid specificity of the tRNA from methionine to isoleucine. In Bacillus cereus (strain ATCC 14579 / DSM 31 / CCUG 7414 / JCM 2152 / NBRC 15305 / NCIMB 9373 / NCTC 2599 / NRRL B-3711), this protein is tRNA(Ile)-lysidine synthase.